We begin with the raw amino-acid sequence, 392 residues long: Methylthioribose-1-phosphate isomerase (392 aa).

Catalysis depends on D253, which acts as the Proton donor.

This sequence belongs to the eIF-2B alpha/beta/delta subunits family. MtnA subfamily.

The protein resides in the cytoplasm. It localises to the nucleus. The enzyme catalyses 5-(methylsulfanyl)-alpha-D-ribose 1-phosphate = 5-(methylsulfanyl)-D-ribulose 1-phosphate. It participates in amino-acid biosynthesis; L-methionine biosynthesis via salvage pathway; L-methionine from S-methyl-5-thio-alpha-D-ribose 1-phosphate: step 1/6. Functionally, catalyzes the interconversion of methylthioribose-1-phosphate (MTR-1-P) into methylthioribulose-1-phosphate (MTRu-1-P). The protein is Methylthioribose-1-phosphate isomerase (mri1) of Pyrenophora tritici-repentis (strain Pt-1C-BFP) (Wheat tan spot fungus).